Here is a 196-residue protein sequence, read N- to C-terminus: [1-hydroxy-2-(trimethylamino)ethyl]phosphonate dioxygenase (glycine-betaine-forming) (196 aa).

Residue tyrosine 30 participates in [(1R)-1-hydroxy-2-(trimethylamino)ethyl]phosphonate binding. 4 residues coordinate Fe cation: tyrosine 30, histidine 40, histidine 64, and aspartate 65. Positions 37 to 156 (MAEHMLQGAT…VAEFEKNPNL (120 aa)) constitute an HD domain. 7 residues coordinate [(1R)-1-hydroxy-2-(trimethylamino)ethyl]phosphonate: histidine 68, histidine 86, histidine 109, lysine 113, serine 131, serine 134, and arginine 163. Fe cation-binding residues include histidine 86 and histidine 109. Residue aspartate 166 coordinates Fe cation.

The cofactor is Fe cation.

The catalysed reaction is [(1R)-1-hydroxy-2-(trimethylamino)ethyl]phosphonate + O2 = glycine betaine + phosphate + 2 H(+). Functionally, involved in the degradation of the naturally occurring organophosphonate 2-(trimethylammonio)ethylphosphonate (TMAEP). Catalyzes the O(2)-dependent cleavage of (R)-1-hydroxy-2-(trimethylammonio)ethylphosphonate (OH-TMAEP) to yield glycine betaine and phosphate. Is highly specific for its N-trimethylated substrate. The sequence is that of [1-hydroxy-2-(trimethylamino)ethyl]phosphonate dioxygenase (glycine-betaine-forming) from Leisingera caerulea (Phaeobacter caeruleus).